Consider the following 795-residue polypeptide: Phenylalanine--tRNA ligase beta subunit (795 aa).

In terms of domain architecture, tRNA-binding spans 39 to 148 (AGTFNGVVVG…LDAPIGTDLR (110 aa)). The B5 domain occupies 401 to 476 (PKVNTVQLRR…RIYGYNSIPN (76 aa)). The Mg(2+) site is built by D454, D460, E463, and E464. Positions 701–794 (SKFPANRRDL…VKQRFNAELR (94 aa)) constitute an FDX-ACB domain.

This sequence belongs to the phenylalanyl-tRNA synthetase beta subunit family. Type 1 subfamily. Tetramer of two alpha and two beta subunits. Requires Mg(2+) as cofactor.

The protein resides in the cytoplasm. The enzyme catalyses tRNA(Phe) + L-phenylalanine + ATP = L-phenylalanyl-tRNA(Phe) + AMP + diphosphate + H(+). The protein is Phenylalanine--tRNA ligase beta subunit of Haemophilus influenzae (strain 86-028NP).